The primary structure comprises 1230 residues: MKLKEIDRTAMQAWSPAQNHPIYLATGTSAQQLDATFSTNASLEIFELDLSDPSLDMKSCATFSSSHRYHKLIWGPHKMDSKGDVSGVLIAGGENGNIILYDPSKIIAGDKEVVIAQKDKHTGPVRALDVNIFQTNLVASGANESEIYIWDLNNFATPMTPGAKTQPPEDISCIAWNRQVQHILASASPSGRATVWDLRKNEPIIKVSDHSNRMHCSGLAWHPDVATQMVLASEDDRLPVIQMWDLRFASSPLRVLENHARGILAVAWSMADPELLLSCGKDAKILCSNPNTGEVLYELPTNTQWCFDIQWCPRNPAVLSAASFDGRISVYSIMGGSIDGLRQKQVDKLSSSFGNLDPFGTGQPLPPLQIPQQSAQHSIVLPLKKPPKWIRRPVGASFSFGGKLVTFESVAVPLQQGAEQQRRQPVFISQVVTEKDFLNRSAQLQHAVQSQGFIGYCQKKIEASQTEFEKNVWSFLKVNFEEDSRGKYLELLGYRKEDLGQKIALALNKVDGPDVALKDSDQVAQSDGEESPAAEEQLLGERIKEEKQECDFLPSAGGTFNISVSGDIDGLITRALLTGNFESAVDLCLHDNRMADAIILAIAGGQELLAQTQKKYFAKSQSKITRLITAVVMKNWREIVESCDLKNWREALAAVLTYAKPDEFSALCDLLGTRLEREGDSLLRTQACLCYICAGNVERLVACWTKAQDGSSPLSLQDLIEKVVILRKAVQLTQALDTNTVGALLAEKMSQYASLLAAQGSIAAALAFLPDNTNQPNIVQLRDRLCKAQGKPVSGQESSQSPYERQPLSKGRPGPVAGHSQMPRVQTQQYYPHGENPPPPGFIMQGNVIPNPAAPLPTAPGHMPSQLPPYPQPQPYQPAQQYSFGTGGAAAYRPQQPVAPPASNAYPNTPYISPVASYSGQPQMYTAQQASSPTSSSAASFPPPSSGASFQHGGPGAPPSSSAYALPPGTTGTPPAASELPASQRTENQSFQDQASILEGPQNGWNDPPALNRVPKKKKMPENFMPPVPITSPIMNPSGDPQSQGLQQQPSTPGPLSSHASFPQQHLAGGQPFHGVQQPLAQTGMPPSFSKPNTEGAPGAPIGNTIQHVQALPTEKITKKPIPEEHLILKTTFEDLIQRCLSSATDPQTKRKLDDASKRLEFLYDKLREQTLSPTIINGLHSIARSIETRNYSEGLSVHTHIVSTSNFSETSAFMPVLKVVLSQASKLGV.

WD repeat units lie at residues lysine 4–glutamate 47, serine 64–lysine 111, lysine 120–threonine 160, glutamine 166–lysine 206, aspartate 209–arginine 254, asparagine 258–glutamate 298, and threonine 301–arginine 342. The interval proline 161 to lysine 470 is interaction with SEC13. The WD 8; interaction with SEC13 repeat unit spans residues serine 397–serine 429. Arginine 423 is subject to Asymmetric dimethylarginine. Phosphoserine occurs at positions 526 and 531. Lysine 646 participates in a covalent cross-link: Glycyl lysine isopeptide (Lys-Gly) (interchain with G-Cter in ubiquitin). Disordered regions lie at residues glutamine 789–alanine 905 and methionine 924–asparagine 1104. Serine 798 is subject to Phosphoserine. The segment at serine 799–proline 1123 is interaction with PDCD6. An ALG-2-binding site motif-2 (ABS-2) motif is present at residues glycine 841–asparagine 847. A compositionally biased stretch (pro residues) spans glutamine 866–tyrosine 876. 2 stretches are compositionally biased toward low complexity: residues alanine 930–serine 940 and proline 959–proline 975. 2 stretches are compositionally biased toward polar residues: residues proline 981–alanine 995 and proline 1033–glutamine 1064. The residue at position 1171 (threonine 1171) is a Phosphothreonine. Serine 1173 is subject to Phosphoserine. Lysine 1227 participates in a covalent cross-link: Glycyl lysine isopeptide (Lys-Gly) (interchain with G-Cter in ubiquitin).

This sequence belongs to the WD repeat SEC31 family. As to quaternary structure, COPII is composed of at least 5 proteins: the SEC23/24 complex, the SEC13/31 complex and SAR1. SEC13 and SEC31 make a 2:2 tetramer that forms the edge element of the COPII outer coat. The tetramer self-assembles in multiple copies to form the complete polyhedral cage. Interacts (via WD 8) with SEC13. Interacts with PDCD6; interaction takes place in response to cytosolic calcium increase and leads to bridge together the BCR(KLHL12) complex and SEC31A, leading to monoubiquitination. Interacts with KLHL12. In terms of processing, monoubiquitinated by the BCR(KLHL12) E3 ubiquitin ligase complex, leading to regulate the size of COPII coats.

Its subcellular location is the cytoplasm. The protein resides in the cytoplasmic vesicle. It is found in the COPII-coated vesicle membrane. It localises to the endoplasmic reticulum membrane. In terms of biological role, component of the coat protein complex II (COPII) which promotes the formation of transport vesicles from the endoplasmic reticulum (ER). The coat has two main functions, the physical deformation of the endoplasmic reticulum membrane into vesicles and the selection of cargo molecules. The protein is Protein transport protein Sec31A (Sec31a) of Mus musculus (Mouse).